A 115-amino-acid polypeptide reads, in one-letter code: Large ribosomal subunit protein bL19 (115 aa).

The protein belongs to the bacterial ribosomal protein bL19 family.

In terms of biological role, this protein is located at the 30S-50S ribosomal subunit interface and may play a role in the structure and function of the aminoacyl-tRNA binding site. The sequence is that of Large ribosomal subunit protein bL19 from Streptococcus pyogenes serotype M49 (strain NZ131).